The following is a 709-amino-acid chain: Probable lanosterol 14-alpha demethylase (709 aa).

Cys-425 is a binding site for heme.

It belongs to the cytochrome P450 family. Requires heme as cofactor.

Its subcellular location is the membrane. The enzyme catalyses a 14alpha-methyl steroid + 3 reduced [NADPH--hemoprotein reductase] + 3 O2 = a Delta(14) steroid + formate + 3 oxidized [NADPH--hemoprotein reductase] + 4 H2O + 4 H(+). The protein operates within steroid biosynthesis; zymosterol biosynthesis; zymosterol from lanosterol: step 1/6. Functionally, catalyzes the 14-alpha demethylation of obtusifoliol to 4 alpha-methyl-5 alpha-ergosta-8,14,24(28)-trien-3 beta-ol. The chain is Probable lanosterol 14-alpha demethylase from Acanthamoeba polyphaga (Amoeba).